Reading from the N-terminus, the 769-residue chain is Glutathione biosynthesis bifunctional protein GshAB (769 aa).

The tract at residues 1–347 is glutamate--cysteine ligase; it reads MLDSFKEDPK…QLADENENNI (347 aa). An ATP-grasp domain is found at 514–768; sequence KLVLAEHDIR…IGDKILDFLF (255 aa). 541-599 contacts ATP; that stretch reads SLFEDKQIVVKPKSTNYGWGISIFKNKFTLEDYQEALNIAFSYDSSVIIEEFIPGDEFR. Residues Asp-721, Glu-738, and Asn-740 each contribute to the Mg(2+) site. Residues Asp-721, Glu-738, and Asn-740 each contribute to the Mn(2+) site.

It in the N-terminal section; belongs to the glutamate--cysteine ligase type 1 family. Type 2 subfamily. As to quaternary structure, monomer. Mg(2+) is required as a cofactor. The cofactor is Mn(2+).

The enzyme catalyses L-cysteine + L-glutamate + ATP = gamma-L-glutamyl-L-cysteine + ADP + phosphate + H(+). It catalyses the reaction gamma-L-glutamyl-L-cysteine + glycine + ATP = glutathione + ADP + phosphate + H(+). It functions in the pathway sulfur metabolism; glutathione biosynthesis; glutathione from L-cysteine and L-glutamate: step 1/2. The protein operates within sulfur metabolism; glutathione biosynthesis; glutathione from L-cysteine and L-glutamate: step 2/2. Functionally, synthesizes glutathione from L-glutamate and L-cysteine via gamma-L-glutamyl-L-cysteine. This chain is Glutathione biosynthesis bifunctional protein GshAB, found in Listeria monocytogenes serotype 4b (strain F2365).